The sequence spans 299 residues: Epimerase family protein SERP0438 (299 aa).

It belongs to the NAD(P)-dependent epimerase/dehydratase family. SDR39U1 subfamily.

This is Epimerase family protein SERP0438 from Staphylococcus epidermidis (strain ATCC 35984 / DSM 28319 / BCRC 17069 / CCUG 31568 / BM 3577 / RP62A).